A 66-amino-acid polypeptide reads, in one-letter code: Large ribosomal subunit protein bL35 (66 aa).

The segment covering 1–16 (MPKQKTHRASAKRFKR) has biased composition (basic residues). The tract at residues 1 to 21 (MPKQKTHRASAKRFKRTGSGG) is disordered.

This sequence belongs to the bacterial ribosomal protein bL35 family.

The chain is Large ribosomal subunit protein bL35 from Streptococcus pneumoniae serotype 2 (strain D39 / NCTC 7466).